The primary structure comprises 359 residues: 3-dehydroquinate synthase (359 aa).

Residues 71–76, 105–109, 129–130, Lys-142, Lys-151, and 169–172 contribute to the NAD(+) site; these read DGEAHK, GVIGD, TT, and TLHT. Zn(2+) is bound by residues Glu-184, His-247, and His-264.

This sequence belongs to the sugar phosphate cyclases superfamily. Dehydroquinate synthase family. The cofactor is NAD(+). It depends on Co(2+) as a cofactor. Requires Zn(2+) as cofactor.

The protein localises to the cytoplasm. It catalyses the reaction 7-phospho-2-dehydro-3-deoxy-D-arabino-heptonate = 3-dehydroquinate + phosphate. It functions in the pathway metabolic intermediate biosynthesis; chorismate biosynthesis; chorismate from D-erythrose 4-phosphate and phosphoenolpyruvate: step 2/7. In terms of biological role, catalyzes the conversion of 3-deoxy-D-arabino-heptulosonate 7-phosphate (DAHP) to dehydroquinate (DHQ). The polypeptide is 3-dehydroquinate synthase (Neisseria meningitidis serogroup A / serotype 4A (strain DSM 15465 / Z2491)).